The primary structure comprises 259 residues: Snake venom serine protease homolog rhinocerase 2 (259 aa).

The signal sequence occupies residues 1–17; sequence VLIRVLANLLLLQLSYA. Positions 18 to 23 are excised as a propeptide; sequence QESSEL. The 227-residue stretch at 24 to 250 folds into the Peptidase S1 domain; the sequence is VIGGDECDIN…YTDWIEGIIA (227 aa). 6 cysteine pairs are disulfide-bonded: Cys-30/Cys-164, Cys-51/Cys-67, Cys-99/Cys-257, Cys-143/Cys-211, Cys-175/Cys-190, and Cys-201/Cys-226. An N-linked (GlcNAc...) asparagine glycan is attached at Asn-252.

It belongs to the peptidase S1 family. Snake venom subfamily. Expressed by the venom gland.

It is found in the secreted. Functionally, snake venom serine protease homolog that may act in the hemostasis system of the prey. This chain is Snake venom serine protease homolog rhinocerase 2, found in Bitis rhinoceros (West African gaboon viper).